The sequence spans 293 residues: MVAEIFNHDICENNVVISPRSETAQDNEGLFGRIGTLETRLARNEREIDAAQSVRYRVFVEEMKARLPAEAMRRKRDFDAWDSVCDHLLVLDKSIEGDSEDQIVGTYRLLRQETALANNGFYSASEFDIAGLVARHPGKRFMELGRSCVLPEYRTKRTVELLWQGNWAYAVKHRMDAMIGCASFPGVQPEAHALALSFLHHNCLAKGEWEAVALPELYHEMDLVPVEALNTRKALNAMPPLIKGYMRLGAMFGSGAVVDHAFNTTDVLVVLPVSSIAGRYISYYGGEAERING.

It belongs to the acetyltransferase family. OlsB subfamily.

It carries out the reaction a (3R)-hydroxyacyl-[ACP] + L-ornithine = a lyso-ornithine lipid + holo-[ACP] + H(+). It participates in lipid metabolism. In terms of biological role, catalyzes the first step in the biosynthesis of ornithine lipids, which are phosphorus-free membrane lipids. Catalyzes the 3-hydroxyacyl-acyl carrier protein-dependent acylation of ornithine to form lyso-ornithine lipid (LOL). The polypeptide is L-ornithine N(alpha)-acyltransferase (Agrobacterium fabrum (strain C58 / ATCC 33970) (Agrobacterium tumefaciens (strain C58))).